A 470-amino-acid polypeptide reads, in one-letter code: Serine/threonine-protein kinase-like protein At1g28390 (470 aa).

Residues 52-333 (FSANNFLGKG…LEVVECLKTV (282 aa)) enclose the Protein kinase domain. ATP-binding positions include 58 to 66 (LGKGSHGRV) and lysine 81. Catalysis depends on aspartate 186, which acts as the Proton acceptor. Residues threonine 221 and threonine 226 each carry the phosphothreonine modification. At tyrosine 234 the chain carries Phosphotyrosine.

This sequence belongs to the protein kinase superfamily. Ser/Thr protein kinase family.

It catalyses the reaction L-seryl-[protein] + ATP = O-phospho-L-seryl-[protein] + ADP + H(+). It carries out the reaction L-threonyl-[protein] + ATP = O-phospho-L-threonyl-[protein] + ADP + H(+). The protein is Serine/threonine-protein kinase-like protein At1g28390 of Arabidopsis thaliana (Mouse-ear cress).